Consider the following 229-residue polypeptide: ACD11 homolog protein (229 aa).

Residues E84, K88, R123, R127, and H166 each coordinate an N-acylsphingoid base 1-phosphate.

It belongs to the GLTP family.

This Arabidopsis thaliana (Mouse-ear cress) protein is ACD11 homolog protein.